The chain runs to 92 residues: SPbeta prophage-derived DNA-binding protein HU 2 (92 aa).

Phosphothreonine is present on Thr4. Residues 55-77 (RAARKGRNPQTGEEIDIPATKAP) are disordered.

This sequence belongs to the bacterial histone-like protein family. As to quaternary structure, homodimer.

Histone-like DNA-binding protein which is capable of wrapping DNA to stabilize it, and thus to prevent its denaturation under extreme environmental conditions. The sequence is that of SPbeta prophage-derived DNA-binding protein HU 2 (hup2) from Bacillus subtilis (strain 168).